The chain runs to 1358 residues: Nonribosomal peptide synthetase rstn8 (1358 aa).

The disordered stretch occupies residues methionine 1–aspartate 23. Residues tyrosine 261–glutamine 659 are adenylation. Residues glutamate 795–valine 872 form the Carrier domain. Serine 832 bears the O-(pantetheine 4'-phosphoryl)serine mark. The condensation stretch occupies residues glutamate 909–leucine 1322.

This sequence belongs to the NRP synthetase family. Pantetheine 4'-phosphate serves as cofactor.

It carries out the reaction restrictinol + glycine + H(+) = restricticin + H2O. The protein operates within antifungal biosynthesis. In terms of biological role, nonribosomal peptide synthetase; part of the gene cluster that mediates the biosynthesis of the tetrahydropyranyl antifungal agent restricticin that acts as an inhibitor of CYP51 and blocks the ergosterol biosynthesis. Within the pathway, rstn8 catalyzes the C3 esterification of restrictinol with glycine to yield restricticin. Rstn8 represents an example of the emerging class of single-module NRPS-like enzymes that perform esterification reactions. Rstn8 displays strict substrate specificity toward glycine as no other natural amino acid is accepted. Rstn8 does not recognize desmethylrestrictinol as a substrate, demonstrating that rstn1-catalyzed methylation, possibly protecting the C4-OH, must precede the final esterification step. The highly reducing polyketide synthase rstn3, the short chain dehydrogenase rstn4, the cyclase rstn5, the FAD-dependent monooxygenase rstn6 and the enoylreductase rstn7 are required to generate the first stable intermediate desmethylrestrictinol. Rstn3 with rstn7 biosynthesize the first polyketide chain intermediate that is reduced by rstn4, followed by epoxidation by rstn6 before 6-endo cyclization via epoxide opening by rstn5 leads to desmethylrestrictinol. The methyltransferase rstn1 then catalyzes the C4 O-methylation of desmethylrestrictinol to produce restrictinol, and the nonribosomal peptide synthetase rstn8 catalyzes the C3 esterification of restrictinol with glycine that leads to restricticin. The protein is Nonribosomal peptide synthetase rstn8 of Aspergillus nomiae NRRL (strain ATCC 15546 / NRRL 13137 / CBS 260.88 / M93).